The primary structure comprises 178 residues: Interleukin-10 (178 aa).

An N-terminal signal peptide occupies residues 1–18 (MHSSALLCCLVLLTGVRA). Disulfide bonds link Cys30/Cys126 and Cys80/Cys132. Asn134 carries N-linked (GlcNAc...) asparagine glycosylation.

It belongs to the IL-10 family. Homodimer. Interacts with IL10RA and IL10RB.

The protein localises to the secreted. Major immune regulatory cytokine that acts on many cells of the immune system where it has profound anti-inflammatory functions, limiting excessive tissue disruption caused by inflammation. Mechanistically, IL10 binds to its heterotetrameric receptor comprising IL10RA and IL10RB leading to JAK1 and STAT2-mediated phosphorylation of STAT3. In turn, STAT3 translocates to the nucleus where it drives expression of anti-inflammatory mediators. Targets antigen-presenting cells (APCs) such as macrophages and monocytes and inhibits their release of pro-inflammatory cytokines including granulocyte-macrophage colony-stimulating factor /GM-CSF, granulocyte colony-stimulating factor/G-CSF, IL-1 alpha, IL-1 beta, IL-6, IL-8 and TNF-alpha. Also interferes with antigen presentation by reducing the expression of MHC-class II and co-stimulatory molecules, thereby inhibiting their ability to induce T cell activation. In addition, controls the inflammatory response of macrophages by reprogramming essential metabolic pathways including mTOR signaling. The polypeptide is Interleukin-10 (IL10) (Macaca fascicularis (Crab-eating macaque)).